A 138-amino-acid chain; its full sequence is Basic phospholipase A2 chain HDP-1P (138 aa).

The first 16 residues, 1–16 (MRILWIVAVCLIGVEG), serve as a signal peptide directing secretion. 7 disulfide bridges follow: C42–C131, C44–C60, C59–C111, C65–C138, C66–C104, C73–C97, and C91–C102. Ca(2+) is bound by residues Y43, G45, and G47. H63 is an active-site residue. Position 64 (D64) interacts with Ca(2+). Residue D105 is part of the active site.

Heterodimer; non-covalently linked. The toxic basic protein has phospholipase A2 activity (chain HDP-1P) and the non-toxic acidic protein functions as its inhibitor (chain HPD-1I (AC A4VBF0)). Ca(2+) serves as cofactor. In terms of tissue distribution, expressed by the venom gland.

The protein resides in the secreted. The enzyme catalyses a 1,2-diacyl-sn-glycero-3-phosphocholine + H2O = a 1-acyl-sn-glycero-3-phosphocholine + a fatty acid + H(+). Enzymatic activity and neurotoxicity are inhibited by Triton X-100, which has been determined to be located in the center of the hydrophobic channel of the enzyme. Functionally, heterodimer: shows the same activities as the monomer, but with a lower potency. In terms of biological role, monomer: snake venom phospholipase A2 (PLA2) that shows presynaptic neurotoxicity, anticoagulant activity and that weakly inhibits ADP-induced platelet aggregation. Inhibits exocytosis in pancreatic beta cells, confirming it can act presynaptically in inhibiting the exocytosis of neurotransmitters in neurons. PLA2 catalyzes the calcium-dependent hydrolysis of the 2-acyl groups in 3-sn-phosphoglycerides. The chain is Basic phospholipase A2 chain HDP-1P from Vipera nikolskii (Nikolsky's adder).